The sequence spans 77 residues: Acyl carrier protein (77 aa).

The 76-residue stretch at 2-77 (STIEERVKKI…EAIDYVVSHQ (76 aa)) folds into the Carrier domain. The residue at position 37 (S37) is an O-(pantetheine 4'-phosphoryl)serine.

This sequence belongs to the acyl carrier protein (ACP) family. 4'-phosphopantetheine is transferred from CoA to a specific serine of apo-ACP by AcpS. This modification is essential for activity because fatty acids are bound in thioester linkage to the sulfhydryl of the prosthetic group.

The protein resides in the cytoplasm. The protein operates within lipid metabolism; fatty acid biosynthesis. In terms of biological role, carrier of the growing fatty acid chain in fatty acid biosynthesis. The polypeptide is Acyl carrier protein (Oceanospirillum linum).